A 183-amino-acid polypeptide reads, in one-letter code: NADH-quinone oxidoreductase subunit B 2 (183 aa).

4 residues coordinate [4Fe-4S] cluster: C47, C48, C113, and C142.

It belongs to the complex I 20 kDa subunit family. NDH-1 is composed of 14 different subunits. Subunits NuoB, C, D, E, F, and G constitute the peripheral sector of the complex. Requires [4Fe-4S] cluster as cofactor.

It localises to the cell inner membrane. The catalysed reaction is a quinone + NADH + 5 H(+)(in) = a quinol + NAD(+) + 4 H(+)(out). Functionally, NDH-1 shuttles electrons from NADH, via FMN and iron-sulfur (Fe-S) centers, to quinones in the respiratory chain. The immediate electron acceptor for the enzyme in this species is believed to be ubiquinone. Couples the redox reaction to proton translocation (for every two electrons transferred, four hydrogen ions are translocated across the cytoplasmic membrane), and thus conserves the redox energy in a proton gradient. This is NADH-quinone oxidoreductase subunit B 2 from Anaeromyxobacter sp. (strain Fw109-5).